Here is a 591-residue protein sequence, read N- to C-terminus: DNA ligase (591 aa).

NAD(+) contacts are provided by residues 38-42 (DEKYD), 87-88 (SL), and Glu-119. Residue Lys-121 is the N6-AMP-lysine intermediate of the active site. Positions 142, 181, 298, and 322 each coordinate NAD(+). Positions 415, 418, 433, and 439 each coordinate Zn(2+).

The protein belongs to the NAD-dependent DNA ligase family. LigA subfamily. The cofactor is Mg(2+). Mn(2+) is required as a cofactor.

It catalyses the reaction NAD(+) + (deoxyribonucleotide)n-3'-hydroxyl + 5'-phospho-(deoxyribonucleotide)m = (deoxyribonucleotide)n+m + AMP + beta-nicotinamide D-nucleotide.. Functionally, DNA ligase that catalyzes the formation of phosphodiester linkages between 5'-phosphoryl and 3'-hydroxyl groups in double-stranded DNA using NAD as a coenzyme and as the energy source for the reaction. It is essential for DNA replication and repair of damaged DNA. This Wigglesworthia glossinidia brevipalpis protein is DNA ligase.